The primary structure comprises 292 residues: Elongation factor Ts (292 aa).

The interval 80-83 (TDFV) is involved in Mg(2+) ion dislocation from EF-Tu.

Belongs to the EF-Ts family.

Its subcellular location is the cytoplasm. Functionally, associates with the EF-Tu.GDP complex and induces the exchange of GDP to GTP. It remains bound to the aminoacyl-tRNA.EF-Tu.GTP complex up to the GTP hydrolysis stage on the ribosome. The protein is Elongation factor Ts of Cupriavidus taiwanensis (strain DSM 17343 / BCRC 17206 / CCUG 44338 / CIP 107171 / LMG 19424 / R1) (Ralstonia taiwanensis (strain LMG 19424)).